Reading from the N-terminus, the 286-residue chain is Pantothenate synthetase (286 aa).

30–37 (MGNLHEGH) lines the ATP pocket. H37 acts as the Proton donor in catalysis. Residue Q61 participates in (R)-pantoate binding. Q61 contacts beta-alanine. 149-152 (GRKD) provides a ligand contact to ATP. Q155 provides a ligand contact to (R)-pantoate. Residues V178 and 186 to 189 (MSSR) each bind ATP.

The protein belongs to the pantothenate synthetase family. Homodimer.

Its subcellular location is the cytoplasm. The enzyme catalyses (R)-pantoate + beta-alanine + ATP = (R)-pantothenate + AMP + diphosphate + H(+). It participates in cofactor biosynthesis; (R)-pantothenate biosynthesis; (R)-pantothenate from (R)-pantoate and beta-alanine: step 1/1. Its function is as follows. Catalyzes the condensation of pantoate with beta-alanine in an ATP-dependent reaction via a pantoyl-adenylate intermediate. This Alkalilimnicola ehrlichii (strain ATCC BAA-1101 / DSM 17681 / MLHE-1) protein is Pantothenate synthetase.